We begin with the raw amino-acid sequence, 197 residues long: Peptidyl-tRNA hydrolase (197 aa).

A tRNA-binding site is contributed by Tyr18. Catalysis depends on His23, which acts as the Proton acceptor. Positions 69, 71, and 117 each coordinate tRNA.

This sequence belongs to the PTH family. Monomer.

It localises to the cytoplasm. It carries out the reaction an N-acyl-L-alpha-aminoacyl-tRNA + H2O = an N-acyl-L-amino acid + a tRNA + H(+). Its function is as follows. Hydrolyzes ribosome-free peptidyl-tRNAs (with 1 or more amino acids incorporated), which drop off the ribosome during protein synthesis, or as a result of ribosome stalling. Functionally, catalyzes the release of premature peptidyl moieties from peptidyl-tRNA molecules trapped in stalled 50S ribosomal subunits, and thus maintains levels of free tRNAs and 50S ribosomes. The protein is Peptidyl-tRNA hydrolase of Tolumonas auensis (strain DSM 9187 / NBRC 110442 / TA 4).